The sequence spans 364 residues: Adenine deaminase (364 aa).

Residues H25, H27, and H221 each coordinate Zn(2+). E224 functions as the Proton donor in the catalytic mechanism. D301 serves as a coordination point for Zn(2+). D302 contacts substrate.

Belongs to the metallo-dependent hydrolases superfamily. Adenosine and AMP deaminases family. Adenine deaminase type 2 subfamily. Requires Zn(2+) as cofactor.

Its subcellular location is the cytoplasm. The protein localises to the nucleus. The enzyme catalyses adenine + H2O + H(+) = hypoxanthine + NH4(+). Catalyzes the hydrolytic deamination of adenine to hypoxanthine. Plays an important role in the purine salvage pathway and in nitrogen catabolism. Has no activity with adenosine as a substrate. This Emericella nidulans (strain FGSC A4 / ATCC 38163 / CBS 112.46 / NRRL 194 / M139) (Aspergillus nidulans) protein is Adenine deaminase (aah1).